Here is a 678-residue protein sequence, read N- to C-terminus: Penicillin-binding protein activator LpoA (678 aa).

An N-terminal signal peptide occupies residues 1–26 (MVPSTFSRLKAARCLPVVLAALIFAG). Residue cysteine 27 is the site of N-palmitoyl cysteine attachment. Residue cysteine 27 is the site of S-diacylglycerol cysteine attachment. 2 disordered regions span residues 304–338 (AEQP…SVPV) and 495–530 (IALT…QFTN). Positions 513-529 (TTNNPTLQTTPTDDQFT) are enriched in low complexity.

The protein belongs to the LpoA family. Interacts with PBP1a.

The protein resides in the cell outer membrane. In terms of biological role, regulator of peptidoglycan synthesis that is essential for the function of penicillin-binding protein 1A (PBP1a). The polypeptide is Penicillin-binding protein activator LpoA (Escherichia coli O6:H1 (strain CFT073 / ATCC 700928 / UPEC)).